The primary structure comprises 224 residues: C-&gt;U-editing enzyme APOBEC-2 (224 aa).

Positions 1-23 (MAQKEEAAEAAAPASQNGDDLEN) are disordered. Residues Glu-60 and His-98 each coordinate Zn(2+). One can recognise a CMP/dCMP-type deaminase domain in the interval 64 to 169 (GRNKTFLCYV…PEVQAALKKL (106 aa)). Residue Glu-100 is the Proton donor of the active site. Residues Cys-128 and Cys-131 each coordinate Zn(2+).

This sequence belongs to the cytidine and deoxycytidylate deaminase family. In terms of assembly, homotetramer. Requires Zn(2+) as cofactor. As to expression, expressed exclusively in heart and skeletal muscle.

The enzyme catalyses cytidine(6666) in apoB mRNA + H2O + H(+) = uridine(6666) in apoB mRNA + NH4(+). Functionally, probable C to U editing enzyme whose physiological substrate is not yet known. Does not display detectable apoB mRNA editing. Has a low intrinsic cytidine deaminase activity. May play a role in the epigenetic regulation of gene expression through the process of active DNA demethylation. The chain is C-&gt;U-editing enzyme APOBEC-2 (Apobec2) from Mus musculus (Mouse).